Consider the following 385-residue polypeptide: Protein-glutamate methylesterase/protein-glutamine glutaminase (385 aa).

In terms of domain architecture, Response regulatory spans arginine 20–histidine 138. Aspartate 71 is subject to 4-aspartylphosphate. A CheB-type methylesterase domain is found at glycine 189–aspartate 383. Active-site residues include serine 201, histidine 229, and aspartate 325.

This sequence belongs to the CheB family. Phosphorylated by CheA. Phosphorylation of the N-terminal regulatory domain activates the methylesterase activity.

It is found in the cytoplasm. It carries out the reaction [protein]-L-glutamate 5-O-methyl ester + H2O = L-glutamyl-[protein] + methanol + H(+). It catalyses the reaction L-glutaminyl-[protein] + H2O = L-glutamyl-[protein] + NH4(+). Its function is as follows. Involved in chemotaxis. Part of a chemotaxis signal transduction system that modulates chemotaxis in response to various stimuli. Catalyzes the demethylation of specific methylglutamate residues introduced into the chemoreceptors (methyl-accepting chemotaxis proteins or MCP) by CheR. Also mediates the irreversible deamidation of specific glutamine residues to glutamic acid. The chain is Protein-glutamate methylesterase/protein-glutamine glutaminase from Rhodopseudomonas palustris (strain BisB5).